A 61-amino-acid chain; its full sequence is Large ribosomal subunit protein uL30 (61 aa).

It belongs to the universal ribosomal protein uL30 family. As to quaternary structure, part of the 50S ribosomal subunit.

This is Large ribosomal subunit protein uL30 from Bifidobacterium adolescentis (strain ATCC 15703 / DSM 20083 / NCTC 11814 / E194a).